The following is a 208-amino-acid chain: Small ribosomal subunit protein uS4 (208 aa).

A disordered region spans residues 30–51; it reads KSSLEKRPYAPGQHGQRRSKIS. Residues 98-161 enclose the S4 RNA-binding domain; it reads RRLDNVVYRM…KNNPQVQRSI (64 aa).

This sequence belongs to the universal ribosomal protein uS4 family. In terms of assembly, part of the 30S ribosomal subunit. Contacts protein S5. The interaction surface between S4 and S5 is involved in control of translational fidelity.

In terms of biological role, one of the primary rRNA binding proteins, it binds directly to 16S rRNA where it nucleates assembly of the body of the 30S subunit. With S5 and S12 plays an important role in translational accuracy. The protein is Small ribosomal subunit protein uS4 of Wolinella succinogenes (strain ATCC 29543 / DSM 1740 / CCUG 13145 / JCM 31913 / LMG 7466 / NCTC 11488 / FDC 602W) (Vibrio succinogenes).